An 844-amino-acid polypeptide reads, in one-letter code: Leucine--tRNA ligase (844 aa).

A 'HIGH' region motif is present at residues 39 to 49 (PYPSGRIHMGH). Positions 621–625 (KMSKS) match the 'KMSKS' region motif. An ATP-binding site is contributed by lysine 624.

This sequence belongs to the class-I aminoacyl-tRNA synthetase family.

It localises to the cytoplasm. The catalysed reaction is tRNA(Leu) + L-leucine + ATP = L-leucyl-tRNA(Leu) + AMP + diphosphate. This chain is Leucine--tRNA ligase, found in Paracoccus denitrificans (strain Pd 1222).